Here is a 245-residue protein sequence, read N- to C-terminus: DNA repair protein RecO (245 aa).

This sequence belongs to the RecO family.

Functionally, involved in DNA repair and RecF pathway recombination. This is DNA repair protein RecO from Chromobacterium violaceum (strain ATCC 12472 / DSM 30191 / JCM 1249 / CCUG 213 / NBRC 12614 / NCIMB 9131 / NCTC 9757 / MK).